Here is a 381-residue protein sequence, read N- to C-terminus: Selenoprotein P (381 aa).

A signal peptide spans 1 to 19 (MWRSLGLALALCLLPSGGT). N46 carries N-linked (GlcNAc...) asparagine glycosylation. Residue U59 is a non-standard amino acid, selenocysteine. N83 is a glycosylation site (N-linked (GlcNAc...) (complex) asparagine). N119, N128, and N174 each carry an N-linked (GlcNAc...) asparagine glycan. Residues 200–268 (TPSPHYHHEH…ENRDMPASED (69 aa)) form a disordered region. A compositionally biased stretch (basic residues) spans 204–216 (HYHHEHHHNHGHQ). Residues 218–230 (LGSSELSENQQPG) are compositionally biased toward polar residues. Over residues 243 to 255 (LHHHHKHKGQHRQ) the composition is skewed to basic residues. Phosphoserine is present on S266. Residues U300, U318, and U330 are each a non-standard amino acid (selenocysteine). N-linked (GlcNAc...) asparagine glycosylation is present at N338. Non-standard amino acids (selenocysteine) are located at U345, U352, U367, U369, U376, and U378. Residues 355–381 (SQQLIPTEASASURUKNQAKKUEUPSN) form a disordered region.

The protein belongs to the selenoprotein P family. In terms of processing, phosphorylation sites are present in the extracellular medium. As to expression, made in the liver and heart and secreted into the plasma. It is also found in the kidney.

The protein resides in the secreted. Its function is as follows. Might be responsible for some of the extracellular antioxidant defense properties of selenium or might be involved in the transport of selenium. May supply selenium to tissues such as brain and testis. This chain is Selenoprotein P, found in Homo sapiens (Human).